The following is a 526-amino-acid chain: Glucose-6-phosphate isomerase (526 aa).

Catalysis depends on glutamate 347, which acts as the Proton donor. Active-site residues include histidine 378 and lysine 493.

The protein belongs to the GPI family.

The protein localises to the cytoplasm. It catalyses the reaction alpha-D-glucose 6-phosphate = beta-D-fructose 6-phosphate. It participates in carbohydrate biosynthesis; gluconeogenesis. It functions in the pathway carbohydrate degradation; glycolysis; D-glyceraldehyde 3-phosphate and glycerone phosphate from D-glucose: step 2/4. Catalyzes the reversible isomerization of glucose-6-phosphate to fructose-6-phosphate. The polypeptide is Glucose-6-phosphate isomerase (Chlamydia pneumoniae (Chlamydophila pneumoniae)).